A 226-amino-acid polypeptide reads, in one-letter code: PKHD-type hydroxylase HNE_2117 (226 aa).

Positions 78-178 (TVLTPRFNRY…RLASFLWTQS (101 aa)) constitute a Fe2OG dioxygenase domain. Fe cation contacts are provided by histidine 96, aspartate 98, and histidine 159. Position 169 (arginine 169) interacts with 2-oxoglutarate.

Fe(2+) is required as a cofactor. Requires L-ascorbate as cofactor.

In Hyphomonas neptunium (strain ATCC 15444), this protein is PKHD-type hydroxylase HNE_2117.